The following is a 226-amino-acid chain: Ribonuclease 3 (226 aa).

One can recognise an RNase III domain in the interval L5–G127. E40 serves as a coordination point for Mg(2+). The active site involves D44. Residues D113 and E116 each contribute to the Mg(2+) site. The active site involves E116. The 71-residue stretch at D154 to V224 folds into the DRBM domain.

The protein belongs to the ribonuclease III family. Homodimer. The cofactor is Mg(2+).

It is found in the cytoplasm. The enzyme catalyses Endonucleolytic cleavage to 5'-phosphomonoester.. Functionally, digests double-stranded RNA. Involved in the processing of primary rRNA transcript to yield the immediate precursors to the large and small rRNAs (23S and 16S). Processes some mRNAs, and tRNAs when they are encoded in the rRNA operon. Processes pre-crRNA and tracrRNA of type II CRISPR loci if present in the organism. The polypeptide is Ribonuclease 3 (Hahella chejuensis (strain KCTC 2396)).